The following is a 181-amino-acid chain: Trafficking protein particle complex subunit 3 homolog (181 aa).

A lipid anchor (S-palmitoyl cysteine) is attached at C70.

The protein belongs to the TRAPP small subunits family. BET3 subfamily. Homodimer. Part of the multisubunit TRAPP (transport protein particle) complex.

It is found in the golgi apparatus. Its subcellular location is the cis-Golgi network. The protein localises to the endoplasmic reticulum. Its function is as follows. May play a role in vesicular transport from endoplasmic reticulum to Golgi. Required for the systemic spread of the RNAi response. This Caenorhabditis briggsae protein is Trafficking protein particle complex subunit 3 homolog.